The sequence spans 123 residues: Large ribosomal subunit protein uL14 (123 aa).

It belongs to the universal ribosomal protein uL14 family. As to quaternary structure, part of the 50S ribosomal subunit. Forms a cluster with proteins L3 and L19. In the 70S ribosome, L14 and L19 interact and together make contacts with the 16S rRNA in bridges B5 and B8.

In terms of biological role, binds to 23S rRNA. Forms part of two intersubunit bridges in the 70S ribosome. The sequence is that of Large ribosomal subunit protein uL14 from Histophilus somni (strain 129Pt) (Haemophilus somnus).